Reading from the N-terminus, the 85-residue chain is U4-theraphotoxin-Hhn1e (85 aa).

Positions 1-22 (MKVTLIAILTCAAVLVLHTTAA) are cleaved as a signal peptide. Positions 23–48 (EELEAESQLMEVGMPDTELAAVDEER) are excised as a propeptide. Cystine bridges form between Cys52/Cys66, Cys56/Cys77, and Cys71/Cys82.

It belongs to the neurotoxin 12 (Hwtx-2) family. 02 (Hwtx-2) subfamily. In terms of tissue distribution, expressed by the venom gland.

Its subcellular location is the secreted. Postsynaptic neurotoxin. This Cyriopagopus hainanus (Chinese bird spider) protein is U4-theraphotoxin-Hhn1e.